The chain runs to 1067 residues: Sal-like protein 4 (1067 aa).

Positions 1 to 62 are disordered; that stretch reads MSRRKQAKPQ…SEDSIPVKRP (62 aa). The segment covering 15–42 has biased composition (low complexity); that stretch reads EEGQGEQPQQLPSPDLAEALAAEEPGAP. A Phosphoserine modification is found at serine 53. The segment at 68–90 adopts a C2H2-type 1; atypical zinc-finger fold; sequence HICNKCCAEFFSLSEFMEHKKSC. Residues 115-140 form a disordered region; it reads ALSHQLGSPSNKDSLQENGSSSGDLK. A compositionally biased stretch (polar residues) spans 119 to 137; it reads QLGSPSNKDSLQENGSSSG. Residue lysine 151 forms a Glycyl lysine isopeptide (Lys-Gly) (interchain with G-Cter in SUMO1); alternate linkage. Residue lysine 151 forms a Glycyl lysine isopeptide (Lys-Gly) (interchain with G-Cter in SUMO2); alternate linkage. Glycyl lysine isopeptide (Lys-Gly) (interchain with G-Cter in SUMO2) cross-links involve residues lysine 170, lysine 185, and lysine 291. The residue at position 308 (serine 308) is a Phosphoserine. Lysine 317 participates in a covalent cross-link: Glycyl lysine isopeptide (Lys-Gly) (interchain with G-Cter in SUMO1); alternate. Residue lysine 317 forms a Glycyl lysine isopeptide (Lys-Gly) (interchain with G-Cter in SUMO2); alternate linkage. A Glycyl lysine isopeptide (Lys-Gly) (interchain with G-Cter in SUMO2) cross-link involves residue lysine 377. Residue lysine 379 forms a Glycyl lysine isopeptide (Lys-Gly) (interchain with G-Cter in SUMO1); alternate linkage. Residue lysine 379 forms a Glycyl lysine isopeptide (Lys-Gly) (interchain with G-Cter in SUMO2); alternate linkage. 2 C2H2-type zinc fingers span residues 387 to 409 and 415 to 437; these read HKCRYCPKVFGTDSSLQIHLRSH and YVCPICGHRFTTKGNLKVHLQRH. Lysine 441 participates in a covalent cross-link: Glycyl lysine isopeptide (Lys-Gly) (interchain with G-Cter in SUMO2). Residues 471–521 form a disordered region; sequence DESSLSVDAEPVPVTGTPSLGLPQKLTSGPNSRDLMGGSLPNDMQPGPSPE. Lysine 557 is covalently cross-linked (Glycyl lysine isopeptide (Lys-Gly) (interchain with G-Cter in SUMO2)). 2 C2H2-type zinc fingers span residues 573-595 and 601-623; these read NECLICHRVLSCQSSLKMHYRTH and FQCKICGRAFSTKGNLKTHLGVH. Residues lysine 604 and lysine 630 each participate in a glycyl lysine isopeptide (Lys-Gly) (interchain with G-Cter in SUMO2) cross-link. The segment at 633–655 adopts a C2H2-type 6 zinc-finger fold; it reads HSCPICQKKFTNAVMLQQHIRMH. Disordered regions lie at residues 682-716 and 752-835; these read ENGSASGVCQDDAAEGMEAEEVCSQDVPSGPSTVS and RQSS…SLPP. Positions 693–704 are enriched in acidic residues; it reads DAAEGMEAEEVC. Composition is skewed to polar residues over residues 707-716 and 752-761; these read DVPSGPSTVS and RQSSRENSSL. 2 positions are modified to phosphoserine: serine 785 and serine 798. Over residues 798 to 809 the composition is skewed to polar residues; sequence SPANSQAGSVKS. A compositionally biased stretch (basic and acidic residues) spans 810–829; it reads RSPEGHKAEGVESCRVDTEG. Lysine 846 participates in a covalent cross-link: Glycyl lysine isopeptide (Lys-Gly) (interchain with G-Cter in SUMO1); alternate. Lysine 846 is covalently cross-linked (Glycyl lysine isopeptide (Lys-Gly) (interchain with G-Cter in SUMO2); alternate). A C2H2-type 7 zinc finger spans residues 880–902; that stretch reads HCCTRCGKNFSSASALQIHERTH. A Glycyl lysine isopeptide (Lys-Gly) (interchain with G-Cter in SUMO2) cross-link involves residue lysine 906. Residues 908 to 930 form a C2H2-type 8 zinc finger; the sequence is FVCNICGRAFTTKGNLKVHYMTH. Glycyl lysine isopeptide (Lys-Gly) (interchain with G-Cter in SUMO2) cross-links involve residues lysine 942 and lysine 957. Serine 1029 is modified (phosphoserine).

It belongs to the sal C2H2-type zinc-finger protein family. In terms of assembly, interacts with POU5F1/OCT4. Interacts with NANOG. Interacts with BEND3. Interacts with NSD2 (via PHD-type zinc fingers 1, 2 and 3). Interacts with NRBP1. In terms of processing, sumoylation with both SUMO1 and SUMO2 regulates the stability, subcellular localization, transcriptional activity, and may reduce interaction with POU5F1/OCT4.

Its subcellular location is the cytoplasm. It localises to the nucleus. In terms of biological role, transcription factor with a key role in the maintenance and self-renewal of embryonic and hematopoietic stem cells. The protein is Sal-like protein 4 (Sall4) of Mus musculus (Mouse).